The chain runs to 122 residues: Small ribosomal subunit protein bS16 (122 aa).

The segment at 81–122 is disordered; the sequence is GLMKRDAKNNPKKGEPGEKAKERAKERAEKAAAGSTEDAAAE. The segment covering 83 to 110 has biased composition (basic and acidic residues); that stretch reads MKRDAKNNPKKGEPGEKAKERAKERAEK. Low complexity predominate over residues 111–122; the sequence is AAAGSTEDAAAE.

It belongs to the bacterial ribosomal protein bS16 family.

This is Small ribosomal subunit protein bS16 from Xanthobacter autotrophicus (strain ATCC BAA-1158 / Py2).